We begin with the raw amino-acid sequence, 288 residues long: Bifunctional protein FolD (288 aa).

Residues 166–168, Ser-191, and Ile-232 contribute to the NADP(+) site; that span reads GRS.

Belongs to the tetrahydrofolate dehydrogenase/cyclohydrolase family. In terms of assembly, homodimer.

It catalyses the reaction (6R)-5,10-methylene-5,6,7,8-tetrahydrofolate + NADP(+) = (6R)-5,10-methenyltetrahydrofolate + NADPH. The catalysed reaction is (6R)-5,10-methenyltetrahydrofolate + H2O = (6R)-10-formyltetrahydrofolate + H(+). The protein operates within one-carbon metabolism; tetrahydrofolate interconversion. Functionally, catalyzes the oxidation of 5,10-methylenetetrahydrofolate to 5,10-methenyltetrahydrofolate and then the hydrolysis of 5,10-methenyltetrahydrofolate to 10-formyltetrahydrofolate. This is Bifunctional protein FolD from Rickettsia massiliae (strain Mtu5).